Consider the following 348-residue polypeptide: F-box protein At2g20380 (348 aa).

In terms of domain architecture, F-box spans 14–60 (SPESNSLPNDLIVTILARLSQSYYPKLSLVSKTFRAILASPELYQTR).

This chain is F-box protein At2g20380, found in Arabidopsis thaliana (Mouse-ear cress).